Here is a 75-residue protein sequence, read N- to C-terminus: Small ribosomal subunit protein eS17 (75 aa).

This sequence belongs to the eukaryotic ribosomal protein eS17 family.

The sequence is that of Small ribosomal subunit protein eS17 from Thermoplasma volcanium (strain ATCC 51530 / DSM 4299 / JCM 9571 / NBRC 15438 / GSS1).